Here is a 131-residue protein sequence, read N- to C-terminus: Heterochromatin silencing protein rss1 (131 aa).

As to quaternary structure, monomer.

The protein localises to the cytoplasm. Its subcellular location is the nucleus. In terms of biological role, required for heterochromatin silencing within pericentromeric repeats and at telomers. Facilitates the recruitment of Clr6 histone deacetylase (HDAC) by interacting with histones. Also interacts with Rad25, which mediates heterochromatin silencing in DNA repeats by recruiting the RITS complex. Together with Rad25, forms a regulatory hub that defines heterochromatin silencing within tandem repeats via linking RNAi and HDAC. The chain is Heterochromatin silencing protein rss1 (rss1) from Schizosaccharomyces pombe (strain 972 / ATCC 24843) (Fission yeast).